A 255-amino-acid chain; its full sequence is Indole-3-glycerol phosphate synthase (255 aa).

It belongs to the TrpC family.

It carries out the reaction 1-(2-carboxyphenylamino)-1-deoxy-D-ribulose 5-phosphate + H(+) = (1S,2R)-1-C-(indol-3-yl)glycerol 3-phosphate + CO2 + H2O. It functions in the pathway amino-acid biosynthesis; L-tryptophan biosynthesis; L-tryptophan from chorismate: step 4/5. In Streptococcus pneumoniae (strain 70585), this protein is Indole-3-glycerol phosphate synthase.